We begin with the raw amino-acid sequence, 348 residues long: tRNA N6-adenosine threonylcarbamoyltransferase (348 aa).

Fe cation contacts are provided by H115 and H119. Residues 138-142 (LVSGG), D171, G184, and N278 each bind substrate. D306 is a binding site for Fe cation.

This sequence belongs to the KAE1 / TsaD family. Requires Fe(2+) as cofactor.

The protein resides in the cytoplasm. It carries out the reaction L-threonylcarbamoyladenylate + adenosine(37) in tRNA = N(6)-L-threonylcarbamoyladenosine(37) in tRNA + AMP + H(+). Functionally, required for the formation of a threonylcarbamoyl group on adenosine at position 37 (t(6)A37) in tRNAs that read codons beginning with adenine. Is involved in the transfer of the threonylcarbamoyl moiety of threonylcarbamoyl-AMP (TC-AMP) to the N6 group of A37, together with TsaE and TsaB. TsaD likely plays a direct catalytic role in this reaction. The chain is tRNA N6-adenosine threonylcarbamoyltransferase from Methylibium petroleiphilum (strain ATCC BAA-1232 / LMG 22953 / PM1).